The primary structure comprises 258 residues: Ubiquinone/menaquinone biosynthesis C-methyltransferase UbiE (258 aa).

S-adenosyl-L-methionine is bound by residues Thr-81, Asp-102, and 130 to 131 (NA).

Belongs to the class I-like SAM-binding methyltransferase superfamily. MenG/UbiE family.

The enzyme catalyses a 2-demethylmenaquinol + S-adenosyl-L-methionine = a menaquinol + S-adenosyl-L-homocysteine + H(+). The catalysed reaction is a 2-methoxy-6-(all-trans-polyprenyl)benzene-1,4-diol + S-adenosyl-L-methionine = a 5-methoxy-2-methyl-3-(all-trans-polyprenyl)benzene-1,4-diol + S-adenosyl-L-homocysteine + H(+). It functions in the pathway quinol/quinone metabolism; menaquinone biosynthesis; menaquinol from 1,4-dihydroxy-2-naphthoate: step 2/2. It participates in cofactor biosynthesis; ubiquinone biosynthesis. Functionally, methyltransferase required for the conversion of demethylmenaquinol (DMKH2) to menaquinol (MKH2) and the conversion of 2-polyprenyl-6-methoxy-1,4-benzoquinol (DDMQH2) to 2-polyprenyl-3-methyl-6-methoxy-1,4-benzoquinol (DMQH2). The sequence is that of Ubiquinone/menaquinone biosynthesis C-methyltransferase UbiE from Allorhizobium ampelinum (strain ATCC BAA-846 / DSM 112012 / S4) (Agrobacterium vitis (strain S4)).